A 269-amino-acid polypeptide reads, in one-letter code: 3-methyl-2-oxobutanoate hydroxymethyltransferase (269 aa).

Mg(2+) is bound by residues Asp42 and Asp81. 3-methyl-2-oxobutanoate contacts are provided by residues 42–43, Asp81, and Lys111; that span reads DS. Residue Glu113 participates in Mg(2+) binding. Glu179 acts as the Proton acceptor in catalysis. The segment at 250-269 is disordered; that stretch reads SGEFPRESHSHTEDELDDLY. Basic and acidic residues predominate over residues 252–262; that stretch reads EFPRESHSHTE.

The protein belongs to the PanB family. Homodecamer; pentamer of dimers. The cofactor is Mg(2+).

It localises to the cytoplasm. The catalysed reaction is 3-methyl-2-oxobutanoate + (6R)-5,10-methylene-5,6,7,8-tetrahydrofolate + H2O = 2-dehydropantoate + (6S)-5,6,7,8-tetrahydrofolate. The protein operates within cofactor biosynthesis; coenzyme A biosynthesis. Its function is as follows. Catalyzes the reversible reaction in which hydroxymethyl group from 5,10-methylenetetrahydrofolate is transferred onto alpha-ketoisovalerate to form ketopantoate. The protein is 3-methyl-2-oxobutanoate hydroxymethyltransferase of Haloarcula marismortui (strain ATCC 43049 / DSM 3752 / JCM 8966 / VKM B-1809) (Halobacterium marismortui).